The following is a 617-amino-acid chain: MPELRSRTVTHGRNMAGARALMRASGVPGADIGRKPIIAVANSFTEFVPGHTHLAPVGRIVSEAVTAAGGIPREFNTIAVDDGIAMGHGGMLYSLPSRDLIADSVEYMVEAHCADALICISNCDKITPGMLNAALRLNIPTVFVSGGPMESGRATLVDGTVRTLDLVDAMSEAVNDKISDADILRIEENACPTCGSCSGMFTANSMNCLTEAIGLSLPGNGSVLATHTARKTLYENAARTVLDLTRRYYEQDDDSVLPRNIATPAAFGNAMALDIAMGGSTNTILHLLAAAQEAEVSYGLAEMDALSRSVPCLAKVAPNVAKDRTYYMEDVHRAGGIPALLGELHRGGLLNEDVHSVHSPSLADWLKTWDVRGGSPSKEAVELWHAAPGCVRSAEAFSQSERWDTLDEDAEGGCIRSVEHAYSKDGGLAVLRGNLAVDGCVVKTAGVDESIWTFEGPAVVCESQEEAVQKILTQQVKEGDVVVIRYEGPKGGPGMQEMLYPTSYLKGRGLGKACALVTDGRFSGGTSGLSIGHASPEAAAGGTIALVEDGDRIRIDIPNRSIELLVDDAELTRREQALNGVYAPKNRDRKVSAALKAYAAMATSADKGAVRDVSKLG.

D82 is a binding site for Mg(2+). C123 is a binding site for [2Fe-2S] cluster. Positions 124 and 125 each coordinate Mg(2+). K125 is modified (N6-carboxylysine). Residue C197 participates in [2Fe-2S] cluster binding. Residue E497 coordinates Mg(2+). S523 functions as the Proton acceptor in the catalytic mechanism.

It belongs to the IlvD/Edd family. As to quaternary structure, homodimer. [2Fe-2S] cluster serves as cofactor. Requires Mg(2+) as cofactor.

The catalysed reaction is (2R)-2,3-dihydroxy-3-methylbutanoate = 3-methyl-2-oxobutanoate + H2O. It carries out the reaction (2R,3R)-2,3-dihydroxy-3-methylpentanoate = (S)-3-methyl-2-oxopentanoate + H2O. Its pathway is amino-acid biosynthesis; L-isoleucine biosynthesis; L-isoleucine from 2-oxobutanoate: step 3/4. It functions in the pathway amino-acid biosynthesis; L-valine biosynthesis; L-valine from pyruvate: step 3/4. In terms of biological role, functions in the biosynthesis of branched-chain amino acids. Catalyzes the dehydration of (2R,3R)-2,3-dihydroxy-3-methylpentanoate (2,3-dihydroxy-3-methylvalerate) into 2-oxo-3-methylpentanoate (2-oxo-3-methylvalerate) and of (2R)-2,3-dihydroxy-3-methylbutanoate (2,3-dihydroxyisovalerate) into 2-oxo-3-methylbutanoate (2-oxoisovalerate), the penultimate precursor to L-isoleucine and L-valine, respectively. The protein is Dihydroxy-acid dehydratase of Streptomyces coelicolor (strain ATCC BAA-471 / A3(2) / M145).